Reading from the N-terminus, the 127-residue chain is Glycine cleavage system H protein (127 aa).

Positions 24-105 (TAVVGITDFA…YNEGWIVKMK (82 aa)) constitute a Lipoyl-binding domain. Residue Lys-65 is modified to N6-lipoyllysine.

This sequence belongs to the GcvH family. The glycine cleavage system is composed of four proteins: P, T, L and H. Requires (R)-lipoate as cofactor.

Functionally, the glycine cleavage system catalyzes the degradation of glycine. The H protein shuttles the methylamine group of glycine from the P protein to the T protein. This is Glycine cleavage system H protein from Chlorobaculum parvum (strain DSM 263 / NCIMB 8327) (Chlorobium vibrioforme subsp. thiosulfatophilum).